Consider the following 200-residue polypeptide: Probable molybdenum cofactor guanylyltransferase (200 aa).

Residues 9–11 (LAG), K21, D69, and D100 contribute to the GTP site. D100 lines the Mg(2+) pocket.

It belongs to the MobA family. Mg(2+) is required as a cofactor.

It is found in the cytoplasm. The enzyme catalyses Mo-molybdopterin + GTP + H(+) = Mo-molybdopterin guanine dinucleotide + diphosphate. In terms of biological role, transfers a GMP moiety from GTP to Mo-molybdopterin (Mo-MPT) cofactor (Moco or molybdenum cofactor) to form Mo-molybdopterin guanine dinucleotide (Mo-MGD) cofactor. The sequence is that of Probable molybdenum cofactor guanylyltransferase from Bacillus cereus (strain Q1).